The sequence spans 206 residues: MALKYKLILASGSPRRVDLLNQAGIEPSRLMPMDIDETPKKSEHPRSLARRLSAEKAEAALAAIKGDITWKGSYILSADTVVAVGRRILGKAEFADEALSSLHLLSGRNHLVYTGICLVTPDRKIRQKIVETKVRFKRLSGFEIENYLASGQWRGKAGAYGIQGLAGTFVQKMVGSYTNVVGLPLYETILLLTGEGFDVHSRWPEG.

The active-site Proton acceptor is D79.

The protein belongs to the Maf family. YhdE subfamily. Requires a divalent metal cation as cofactor.

It is found in the cytoplasm. It carries out the reaction dTTP + H2O = dTMP + diphosphate + H(+). The catalysed reaction is UTP + H2O = UMP + diphosphate + H(+). Nucleoside triphosphate pyrophosphatase that hydrolyzes dTTP and UTP. May have a dual role in cell division arrest and in preventing the incorporation of modified nucleotides into cellular nucleic acids. The sequence is that of dTTP/UTP pyrophosphatase from Rhizobium etli (strain ATCC 51251 / DSM 11541 / JCM 21823 / NBRC 15573 / CFN 42).